The following is a 163-amino-acid chain: 18 kDa protein (163 aa).

The chain is 18 kDa protein from Mus musculus (Mouse).